The primary structure comprises 124 residues: MAIAKEDILAAVEGMTVLELNELVKAFEEKFGVSAAAVAVAGPAGGGAAAAAEEKTEFTVVLTEAGSNKVAVIKAVRELTGLGLKEAKDVVDGAPKAVKEGVDKAAADEAKKKLEDAGAKVEVK.

The protein belongs to the bacterial ribosomal protein bL12 family. Homodimer. Part of the ribosomal stalk of the 50S ribosomal subunit. Forms a multimeric L10(L12)X complex, where L10 forms an elongated spine to which 2 to 4 L12 dimers bind in a sequential fashion. Binds GTP-bound translation factors.

Forms part of the ribosomal stalk which helps the ribosome interact with GTP-bound translation factors. Is thus essential for accurate translation. The chain is Large ribosomal subunit protein bL12 from Burkholderia ambifaria (strain MC40-6).